The primary structure comprises 2631 residues: Cyclic GMP-binding protein C (2631 aa).

LRR repeat units lie at residues 170–194 (TAQIDIEFHLSYTQLVTLPPSIFSL), 196–217 (WIQKLVLTHHNIKTLSEDIGKL), 218–240 (QQLQVLVLENNRLINLPQSIGDL), 242–262 (NLKRLEVDNNHLVSLCSLERL), 263–285 (SKLEVLSVNNNKLTLLPTSIASL), and 287–308 (SLKTLNIKSNPIITPPSTVVSK). The Roc domain occupies 323–515 (GARPCLRSKL…QLIEDIIKTQ (193 aa)). GTP-binding positions include 336–343 (GDPGVGKT), 402–406 (DIANQ), and 458–461 (THID). A COR domain is found at 523 to 741 (PSSFFTLEEA…ESCQKRAVIL (219 aa)). Positions 878-1172 (VKINKEVGRG…KKKFAPLPFT (295 aa)) constitute a Protein kinase domain. ATP is bound by residues 884 to 892 (VGRGAFGIV) and Lys-905. Residue Asp-1023 is the Proton acceptor of the active site. The span at 1225-1250 (ISLTSSGTSPTNSPVGGLLSQSLTQP) shows a compositional bias: polar residues. 2 disordered regions span residues 1225–1263 (ISLTSSGTSPTNSPVGGLLSQSLTQPITSGGSTSGILST) and 1387–1418 (SSATLKSEHISTRRRSDTAGKNGVPPHWRNSV). Residues 1251–1263 (ITSGGSTSGILST) are compositionally biased toward low complexity. One can recognise an N-terminal Ras-GEF domain in the interval 1366-1539 (SVSIIIAATM…QIYGTLTTHE (174 aa)). Over residues 1392–1404 (KSEHISTRRRSDT) the composition is skewed to basic and acidic residues. The DEP domain maps to 1620 to 1706 (PLLGITVKEK…SPTSFYMFLE (87 aa)). Positions 1708–1971 (DPELIARQYT…DLKALDSLQI (264 aa)) constitute a Ras-GEF domain. The tract at residues 1989–2013 (GTTNDDKEKGDENGGGLTSSNFFGN) is disordered. 2014 to 2133 (GSDELTERDW…AKFYKIMANQ (120 aa)) provides a ligand contact to a nucleoside 3',5'-cyclic phosphate. 3 disordered regions span residues 2142–2180 (PWSKPKNTTGGSSSSNQSAGPDNILGTTPTGISSSGGGL), 2192–2239 (MSLS…TTTD), and 2263–2346 (SANL…GQQP). Residues 2144-2174 (SKPKNTTGGSSSSNQSAGPDNILGTTPTGIS) show a composition bias toward low complexity. Over residues 2212-2221 (LPSPPAPLQS) the composition is skewed to pro residues. The span at 2222–2238 (PPTSGISSPTTTTSTTT) shows a compositional bias: low complexity. Residues 2287–2299 (TINKDPHQRDSGS) show a composition bias toward basic and acidic residues. Polar residues predominate over residues 2321-2336 (GSISYLGRTQTSTSPL). Residues 2354-2414 (EFCQRFALVD…KNIDKLICIN (61 aa)) enclose the GRAM domain. 2490–2616 (GDELTKEDWE…ASKWFKYLAT (127 aa)) lines the a nucleoside 3',5'-cyclic phosphate pocket.

It belongs to the protein kinase superfamily. TKL Ser/Thr protein kinase family. ROCO subfamily.

It carries out the reaction L-seryl-[protein] + ATP = O-phospho-L-seryl-[protein] + ADP + H(+). The enzyme catalyses L-threonyl-[protein] + ATP = O-phospho-L-threonyl-[protein] + ADP + H(+). In terms of biological role, promotes the exchange of Ras-bound GDP by GTP. Required for cyclic GMP-mediated chemotaxis, polarity. Plays a key role in cyclic AMP-induced myosin II translocation to the cortex. Also involved in the phosphorylation of mlkA and mlcR, either directly or via an intermediate kinase. The polypeptide is Cyclic GMP-binding protein C (gbpC) (Dictyostelium discoideum (Social amoeba)).